We begin with the raw amino-acid sequence, 343 residues long: MRLIEKVWFNDHPAKWLLVPMLLPLSALFWLISTLRRLSYKIGLSRSCQLSKPVIVVGNIGVGGNGKTPIVLYLVELTRLLGLTPGVISRGYGGKAPHYPYLLDEKSTSIEAGDEPILIQQRCQVPIAVGSDRIASAKLLIAQGCDIIISDDGLQHYRLARDLELVVVDGKRLFGNGLLLPAGPLREGLWRLPKSDLVIYNGKNDQDYQEKNYPCMHMTLAATELCNLLTGERIYLTDFIRLNDSVNAIAGIGAPQRFFDTLKEHQFKVINQQSFVDHHAFVLADFNEFDDNIPLLMTEKDAVKCHDFCKENWWYLPVDATFSDADRQLIIDRTQIAVQSVIQ.

ATP is bound at residue 61-68 (GVGGNGKT).

This sequence belongs to the LpxK family.

The catalysed reaction is a lipid A disaccharide + ATP = a lipid IVA + ADP + H(+). The protein operates within glycolipid biosynthesis; lipid IV(A) biosynthesis; lipid IV(A) from (3R)-3-hydroxytetradecanoyl-[acyl-carrier-protein] and UDP-N-acetyl-alpha-D-glucosamine: step 6/6. Transfers the gamma-phosphate of ATP to the 4'-position of a tetraacyldisaccharide 1-phosphate intermediate (termed DS-1-P) to form tetraacyldisaccharide 1,4'-bis-phosphate (lipid IVA). The chain is Tetraacyldisaccharide 4'-kinase from Colwellia psychrerythraea (strain 34H / ATCC BAA-681) (Vibrio psychroerythus).